The primary structure comprises 102 residues: Small ribosomal subunit protein uS10 (102 aa).

This sequence belongs to the universal ribosomal protein uS10 family. Part of the 30S ribosomal subunit.

Functionally, involved in the binding of tRNA to the ribosomes. This is Small ribosomal subunit protein uS10 from Brevibacillus brevis (strain 47 / JCM 6285 / NBRC 100599).